The sequence spans 396 residues: NADH-quinone oxidoreductase subunit D (396 aa).

The protein belongs to the complex I 49 kDa subunit family. As to quaternary structure, NDH-1 is composed of 14 different subunits. Subunits NuoB, C, D, E, F, and G constitute the peripheral sector of the complex.

Its subcellular location is the cell inner membrane. It catalyses the reaction a quinone + NADH + 5 H(+)(in) = a quinol + NAD(+) + 4 H(+)(out). Its function is as follows. NDH-1 shuttles electrons from NADH, via FMN and iron-sulfur (Fe-S) centers, to quinones in the respiratory chain. The immediate electron acceptor for the enzyme in this species is believed to be ubiquinone. Couples the redox reaction to proton translocation (for every two electrons transferred, four hydrogen ions are translocated across the cytoplasmic membrane), and thus conserves the redox energy in a proton gradient. This chain is NADH-quinone oxidoreductase subunit D, found in Brucella abortus (strain S19).